Here is a 145-residue protein sequence, read N- to C-terminus: Protein SprT-like (145 aa).

In terms of domain architecture, SprT-like spans Asn-5–Leu-141. Position 64 (His-64) interacts with Zn(2+). The active site involves Glu-65. His-68 contacts Zn(2+).

The protein belongs to the SprT family. The cofactor is Zn(2+).

Its subcellular location is the cytoplasm. The protein is Protein SprT-like of Streptococcus sanguinis (strain SK36).